The primary structure comprises 338 residues: MTNKKRILSGVQPTGDLHIGNWLGAINNWVELQEKHETFLCVVDLHAITTEYDTKQLSKNTLSTAALYIACGINPKICSIFVQSQISAHSELCWILNCMTPINWMERMIQFKEKSIQQGNNVSIGLFDYPILMAADILLYDADYVPVGEDQKQHLELAKDIAQQRINAKFGKEENILKIPQPIIMKKGSKIMSLNDGSKKMSKSDINEGSRINLLDTPEIITKKIKRAKSDSYMGMEFNNPERPESRNLLMIYSLLSGKEVSELENDLSQTGWGTFKKIFTEQIIESLKPIQERYQVLINDPHELNKILIQGKEKAEVVANKTLSRVKSELGFFEIEK.

Residues 12 to 14 and 20 to 21 each bind ATP; these read QPT and GN. The short motif at 13 to 21 is the 'HIGH' region element; it reads PTGDLHIGN. An L-tryptophan-binding site is contributed by Asp-136. Residues 148 to 150, Ile-191, and 200 to 204 contribute to the ATP site; these read GED and KMSKS. The short motif at 200 to 204 is the 'KMSKS' region element; sequence KMSKS.

This sequence belongs to the class-I aminoacyl-tRNA synthetase family. Homodimer.

Its subcellular location is the cytoplasm. It carries out the reaction tRNA(Trp) + L-tryptophan + ATP = L-tryptophyl-tRNA(Trp) + AMP + diphosphate + H(+). Its function is as follows. Catalyzes the attachment of tryptophan to tRNA(Trp). The polypeptide is Tryptophan--tRNA ligase (Prochlorococcus marinus subsp. pastoris (strain CCMP1986 / NIES-2087 / MED4)).